Here is a 330-residue protein sequence, read N- to C-terminus: Adenylate isopentenyltransferase 5, chloroplastic (330 aa).

The transit peptide at 1-39 (MKPCMTALRQVIQPLSLNFQGNMVDVPFFRRKDKVVFVM) directs the protein to the chloroplast. 40–47 (GATGTGKS) serves as a coordination point for ATP.

This sequence belongs to the IPP transferase family. In terms of tissue distribution, expressed in root primordia, columella root caps, upper part of young inflorescences, and fruit abscission zones.

It is found in the plastid. The protein resides in the chloroplast. The catalysed reaction is dimethylallyl diphosphate + ADP = N(6)-(dimethylallyl)adenosine 5'-diphosphate + diphosphate. It carries out the reaction dimethylallyl diphosphate + ATP = N(6)-(dimethylallyl)adenosine 5'-triphosphate + diphosphate. Its function is as follows. Involved in cytokinin biosynthesis. Catalyzes the transfer of an isopentenyl group from dimethylallyl diphosphate (DMAPP) to ATP and ADP. In Arabidopsis thaliana (Mouse-ear cress), this protein is Adenylate isopentenyltransferase 5, chloroplastic (IPT5).